A 186-amino-acid polypeptide reads, in one-letter code: UPF0461 protein C5orf24 homolog (186 aa).

Residues 60–69 (NETHLQTSTS) show a composition bias toward polar residues. Residues 60–140 (NETHLQTSTS…AAGYKVSPGR (81 aa)) are disordered. Residues 78-92 (LKKKKNLGRSGKRGR) show a composition bias toward basic residues. Polar residues predominate over residues 94–107 (SGTTKSAGYRTSTG).

Belongs to the UPF0461 family.

The polypeptide is UPF0461 protein C5orf24 homolog (Xenopus tropicalis (Western clawed frog)).